Here is a 221-residue protein sequence, read N- to C-terminus: Protein FixW (221 aa).

The 152-residue stretch at 5–156 folds into the Thioredoxin domain; that stretch reads LNLGSPAPPI…LPKVIDGNWR (152 aa). Cys43 and Cys46 are oxidised to a cystine.

The protein belongs to the thioredoxin family.

The chain is Protein FixW (fixW) from Rhizobium leguminosarum.